The chain runs to 152 residues: TOMM20-like protein 1 (152 aa).

Residues 1–9 (MPSVRSLLR) lie on the Mitochondrial intermembrane side of the membrane. The chain crosses the membrane as a helical span at residues 10 to 29 (LLAAAAACGAFAFLGYCIYL). Residues 30 to 152 (NRKRRGDPAF…EQDCLEDDPD (123 aa)) are Cytoplasmic-facing. The segment at 43 to 62 (LRDKRRAEPQKAEEQGTQLW) is disordered. Residues 47–56 (RRAEPQKAEE) are compositionally biased toward basic and acidic residues.

Belongs to the Tom20 family.

Its subcellular location is the mitochondrion outer membrane. This chain is TOMM20-like protein 1 (TOMM20L), found in Homo sapiens (Human).